Reading from the N-terminus, the 659-residue chain is Putative oxidoreductase AegA (659 aa).

4Fe-4S ferredoxin-type domains follow at residues 3 to 22 (RFIM…EIAC), 47 to 77 (HQQQ…SHVD), 78 to 107 (DSIQ…IVLT), 114 to 147 (VKAT…LVTD), and 218 to 252 (DQAQ…WIEL). 20 residues coordinate [4Fe-4S] cluster: C12, C15, C18, C22, C56, C59, C64, C68, C87, C90, C93, C97, C121, C124, C133, C137, C227, C230, C236, and C240.

[4Fe-4S] cluster is required as a cofactor.

In terms of biological role, involved in formate-dependent uric acid degradation under microaerobic and anaerobic conditions. May reduce the enzymes necessary for uric acid degradation. The protein is Putative oxidoreductase AegA of Escherichia coli (strain K12).